A 184-amino-acid polypeptide reads, in one-letter code: Large ribosomal subunit protein uL15 (184 aa).

A disordered region spans residues 1-55 (MDLSSLSPAKGSVKNKKRVGRGQGSGNGTTAGKGNKGQQSRSGYKRPVSEGGQMP). The span at 21 to 35 (RGQGSGNGTTAGKGN) shows a compositional bias: gly residues.

It belongs to the universal ribosomal protein uL15 family. In terms of assembly, part of the 50S ribosomal subunit.

In terms of biological role, binds to the 23S rRNA. The protein is Large ribosomal subunit protein uL15 of Prosthecochloris aestuarii (strain DSM 271 / SK 413).